We begin with the raw amino-acid sequence, 204 residues long: Holliday junction branch migration complex subunit RuvA (204 aa).

The interval 1 to 64 (MIGKLKGTID…EDQLKLFGFM (64 aa)) is domain I. The domain II stretch occupies residues 65 to 143 (TALEREWFNL…AFAGEAINIA (79 aa)). The tract at residues 144 to 151 (LKQELGEG) is flexible linker. Residues 152–204 (VAAAPVADAVSALTNLGYSRDQAANAVAAAMKTAGDGADSAKLIRLGLKELAR) form a domain III region.

This sequence belongs to the RuvA family. In terms of assembly, homotetramer. Forms an RuvA(8)-RuvB(12)-Holliday junction (HJ) complex. HJ DNA is sandwiched between 2 RuvA tetramers; dsDNA enters through RuvA and exits via RuvB. An RuvB hexamer assembles on each DNA strand where it exits the tetramer. Each RuvB hexamer is contacted by two RuvA subunits (via domain III) on 2 adjacent RuvB subunits; this complex drives branch migration. In the full resolvosome a probable DNA-RuvA(4)-RuvB(12)-RuvC(2) complex forms which resolves the HJ.

Its subcellular location is the cytoplasm. Its function is as follows. The RuvA-RuvB-RuvC complex processes Holliday junction (HJ) DNA during genetic recombination and DNA repair, while the RuvA-RuvB complex plays an important role in the rescue of blocked DNA replication forks via replication fork reversal (RFR). RuvA specifically binds to HJ cruciform DNA, conferring on it an open structure. The RuvB hexamer acts as an ATP-dependent pump, pulling dsDNA into and through the RuvAB complex. HJ branch migration allows RuvC to scan DNA until it finds its consensus sequence, where it cleaves and resolves the cruciform DNA. The chain is Holliday junction branch migration complex subunit RuvA from Rhizobium etli (strain CIAT 652).